We begin with the raw amino-acid sequence, 883 residues long: Translation initiation factor IF-2 (883 aa).

2 disordered regions span residues 1-96 (MVDT…RSGM) and 132-259 (QRRA…RGRL). Residues 57 to 66 (PAEPAAAAPE) are compositionally biased toward low complexity. A compositionally biased stretch (pro residues) spans 72–87 (TPAPPAVSPRQQPRPS). A compositionally biased stretch (basic and acidic residues) spans 132-188 (QRRAAQELVDKAEREAAEVRRKAEEERHRHEEETKRKAETEAKKRFGEAEPAKKPAD). Positions 191 to 217 (PASTSTTTTAPRAPVTTTTRPPAVAAE) are enriched in low complexity. Residues 380-551 (PRSPVVTVMG…ALQAELLDLK (172 aa)) enclose the tr-type G domain. Residues 389–396 (GHVDHGKT) are G1. 389 to 396 (GHVDHGKT) lines the GTP pocket. Residues 414-418 (GITQH) form a G2 region. The segment at 437–440 (DTPG) is G3. GTP is bound by residues 437–441 (DTPGH) and 491–494 (NKID). The interval 491–494 (NKID) is G4. Residues 527–529 (SAK) are G5.

This sequence belongs to the TRAFAC class translation factor GTPase superfamily. Classic translation factor GTPase family. IF-2 subfamily.

The protein resides in the cytoplasm. In terms of biological role, one of the essential components for the initiation of protein synthesis. Protects formylmethionyl-tRNA from spontaneous hydrolysis and promotes its binding to the 30S ribosomal subunits. Also involved in the hydrolysis of GTP during the formation of the 70S ribosomal complex. The sequence is that of Translation initiation factor IF-2 from Rhodopseudomonas palustris (strain BisB5).